An 800-amino-acid polypeptide reads, in one-letter code: Phenylalanine--tRNA ligase beta subunit (800 aa).

The region spanning 39 to 154 is the tRNA-binding domain; it reads TKDIKNLVVG…ESQVPGTDAL (116 aa). One can recognise a B5 domain in the interval 408–483; that stretch reads AFITPIDITA…RIYGYDDIPS (76 aa). Mg(2+) contacts are provided by Asp-461, Asp-467, Glu-470, and Glu-471. Residues 708–800 enclose the FDX-ACB domain; sequence PRFPGMSRDI…ALIEQGAVIR (93 aa).

The protein belongs to the phenylalanyl-tRNA synthetase beta subunit family. Type 1 subfamily. Tetramer of two alpha and two beta subunits. It depends on Mg(2+) as a cofactor.

It localises to the cytoplasm. It catalyses the reaction tRNA(Phe) + L-phenylalanine + ATP = L-phenylalanyl-tRNA(Phe) + AMP + diphosphate + H(+). This Staphylococcus aureus (strain MSSA476) protein is Phenylalanine--tRNA ligase beta subunit.